The chain runs to 91 residues: Protein transport protein sft1 (91 aa).

Over 1-68 (MNDQNERRLE…RVVRSAGRRR (68 aa)) the chain is Cytoplasmic. The chain crosses the membrane as a helical; Anchor for type IV membrane protein span at residues 69-86 (IMTMVLAIVGSILIIYYA). Over 87–91 (SKWFF) the chain is Lumenal.

In terms of assembly, component of a SNARE complex consisting of sed5, gos1, ykt6 and sft1.

It is found in the golgi apparatus membrane. Vesicle SNARE required for retrograde transport within the Golgi complex. This Schizosaccharomyces pombe (strain 972 / ATCC 24843) (Fission yeast) protein is Protein transport protein sft1 (sft1).